We begin with the raw amino-acid sequence, 142 residues long: Ribosome-binding factor A (142 aa).

Basic and acidic residues predominate over residues 120–130; that stretch reads EVRRDIDHAPA. A disordered region spans residues 120 to 142; that stretch reads EVRRDIDHAPAEDEFPTDGDDGQ. The segment covering 131-142 has biased composition (acidic residues); the sequence is EDEFPTDGDDGQ.

This sequence belongs to the RbfA family. As to quaternary structure, monomer. Binds 30S ribosomal subunits, but not 50S ribosomal subunits or 70S ribosomes.

It localises to the cytoplasm. In terms of biological role, one of several proteins that assist in the late maturation steps of the functional core of the 30S ribosomal subunit. Associates with free 30S ribosomal subunits (but not with 30S subunits that are part of 70S ribosomes or polysomes). Required for efficient processing of 16S rRNA. May interact with the 5'-terminal helix region of 16S rRNA. This chain is Ribosome-binding factor A, found in Paramagnetospirillum magneticum (strain ATCC 700264 / AMB-1) (Magnetospirillum magneticum).